The following is a 328-amino-acid chain: Arabinose 5-phosphate isomerase KdsD (328 aa).

The SIS domain maps to 42–184 (CEKMFWCKGK…AVALLKARGF (143 aa)). Residues 75-76 (GT), His82, His88, 114-123 (ALIPVLKRLH), 148-150 (KVA), Thr222, and Asp275 each bind substrate. His82 is a Zn(2+) binding site. The CBS 1 domain occupies 210 to 268 (MHTGDEIPHVKKTASLRDALLEVTRKNLGMTVICDDNMMIEGIFTDGDLRRVFDMGVDV). Positions 277 to 328 (MTPGGIRVRPGILAVEALNLMQSRHITSVMVADGDHLLGVLHMHDLLRAGVV) constitute a CBS 2 domain.

The protein belongs to the SIS family. GutQ/KpsF subfamily. In terms of assembly, homotetramer.

The catalysed reaction is D-arabinose 5-phosphate = D-ribulose 5-phosphate. The protein operates within carbohydrate biosynthesis; 3-deoxy-D-manno-octulosonate biosynthesis; 3-deoxy-D-manno-octulosonate from D-ribulose 5-phosphate: step 1/3. It functions in the pathway bacterial outer membrane biogenesis; lipopolysaccharide biosynthesis. Completely inhibited by 10 uM of nickel, copper, cadmium and mercury ions. Inhibited by zinc with an IC(50) of 1-3 uM. Metal ion inhibition may be a mechanism to control activity in vivo. Its function is as follows. Involved in the biosynthesis of 3-deoxy-D-manno-octulosonate (KDO), a unique 8-carbon sugar component of lipopolysaccharides (LPSs). KdsD is not essential in the KDO biosynthesis and can be substituted by GutQ. Catalyzes the reversible aldol-ketol isomerization between D-ribulose 5-phosphate (Ru5P) and D-arabinose 5-phosphate (A5P). The polypeptide is Arabinose 5-phosphate isomerase KdsD (kdsD) (Escherichia coli (strain K12)).